The chain runs to 1372 residues: MAQQTFTGRKRVRKFFGHIKEVAEMPNLIEVQKASYDQFLMVDEPQGGRLDEGLQAVFRSVFPISDFSGTSMLEFVRYEFEQPKYDVDECRQRGMTFAAPLKVTLRLIVFDIDEETGAKSVKDIKEQDVYMGDIPLMTMNGTFIVNGTERVIVSQMHRSPGVFFDHDKGKTHSSGKLLFAARVIPYRGSWLDIEFDAKDIVYARIDRRRKIPVTSLMFALGLDGEAILSTFYKKILYKRTKEGWRVPFDANRFRGYSTINDLIDADTGKVVLEAGKKLTVRAARQLQEKGLKALRLSDEELVGNYLAEDLVNPKTGEIHAEAGEEITDKNMKALNEQGYKELPLLDIDHVNVGAYIRNTLSADKNMTREDALFDIYRVMRPGEPPTLDSAQAMFQSLFFDAERYDLSAVGRVKMNMRLDLDAPDTQRTLRKEDILSVIKTLVDLRDGKGEIDDIDHLGNRRVRSVGELMENQYRIGLLRMERAIKERMSSVDIDTVMPQDLINAKPAAAAVREFFGSSQLSQFMDQTNPLSEITHKRRLSALGPGGLTRERAGFEVRDVHPTHYGRICPIETPEGPNIGLINSLATFARVNKYGFVETPYRKVKDGRVTDEVVYLSAMEEGRYTVAQANVPLDPKGRFTEDLVVCRHAGEVLPVTPDKVDYMDVSPKQLVSVAAALIPFLENDDANRALMGSNMQRQAVPLVRAEAPFVGTGMEGVVARDSGAAIAARRSGVIDQIDATRVVIRATEDLDPTKSGVDIYRLMKYQRSNQSTCINQRPLVKVGDIVKKGDIIADGPSTDLGELALGRNVLVAFMPWNGYNFEDSILLSERIVKEDVFTSIHIEEFEVMARDTKLGPEEITRDIPNVSEEALKNLDEAGIVYIGAEVRAGDILVGKITPKGESPMTPEEKLLRAIFGEKASDVRDTSLRVPPGVQGTIVEVRVFNRHGVDKDERALAIEREEIERLAKDRDDEQAILDRNVYNRLAELLEGRQGIAGPKGFKKDTKITRAVLEEYPKSQWWLFASPNDKLMAEIEAMRKQYDESKKGLEQRFLDKVEKLQRGDELPPGVMKMVKVFVAVKRKIQPGDKMAGRHGNKGVVSKIVPIEDMPFLEDGTHADIVLNPLGVPSRMNVGQILETHLGWACAGLGKRIGQTVDAYLSKQDIKPLKETLKKVYGEDETIKSLNDNELIELGHNLSRGVPIATPVFDGAKEADIEEMLKLAGLDASGQSTVYDGRTGDPFDRKVTVGYIYMLKLHHLVDDKIHARSIGPYSLVTQQPLGGKAQFGGQRFGEMEVWALEAYGAAYTLQEMLTVKSDDVAGRTKVYEAIVRGDDTFEAGIPESFNVLVKEMRSLGLNVDLHNSKMGPAPTSEAAE.

The protein belongs to the RNA polymerase beta chain family. As to quaternary structure, the RNAP catalytic core consists of 2 alpha, 1 beta, 1 beta' and 1 omega subunit. When a sigma factor is associated with the core the holoenzyme is formed, which can initiate transcription.

It carries out the reaction RNA(n) + a ribonucleoside 5'-triphosphate = RNA(n+1) + diphosphate. DNA-dependent RNA polymerase catalyzes the transcription of DNA into RNA using the four ribonucleoside triphosphates as substrates. The sequence is that of DNA-directed RNA polymerase subunit beta from Bradyrhizobium diazoefficiens (strain JCM 10833 / BCRC 13528 / IAM 13628 / NBRC 14792 / USDA 110).